A 348-amino-acid polypeptide reads, in one-letter code: Phenylalanine--tRNA ligase alpha subunit (348 aa).

Glutamate 259 is a Mg(2+) binding site.

The protein belongs to the class-II aminoacyl-tRNA synthetase family. Phe-tRNA synthetase alpha subunit type 1 subfamily. In terms of assembly, tetramer of two alpha and two beta subunits. The cofactor is Mg(2+).

It is found in the cytoplasm. It catalyses the reaction tRNA(Phe) + L-phenylalanine + ATP = L-phenylalanyl-tRNA(Phe) + AMP + diphosphate + H(+). The polypeptide is Phenylalanine--tRNA ligase alpha subunit (Limosilactobacillus reuteri (strain DSM 20016) (Lactobacillus reuteri)).